The following is a 331-amino-acid chain: Meiotically up-regulated gene 172 protein (331 aa).

Residues 72-166 (IKNNEYEKQR…KGNYGLVKAR (95 aa)) are a coiled coil.

The protein belongs to the ADIP family.

Its subcellular location is the cytoplasm. In terms of biological role, has a role in meiosis. This Schizosaccharomyces pombe (strain 972 / ATCC 24843) (Fission yeast) protein is Meiotically up-regulated gene 172 protein (mug172).